Consider the following 452-residue polypeptide: Phosphoglucosamine mutase (452 aa).

The active-site Phosphoserine intermediate is the S109. Mg(2+) contacts are provided by S109, D248, D250, and D252. A Phosphoserine modification is found at S109.

Belongs to the phosphohexose mutase family. The cofactor is Mg(2+). In terms of processing, activated by phosphorylation.

It catalyses the reaction alpha-D-glucosamine 1-phosphate = D-glucosamine 6-phosphate. Its function is as follows. Catalyzes the conversion of glucosamine-6-phosphate to glucosamine-1-phosphate. The chain is Phosphoglucosamine mutase from Erythrobacter litoralis (strain HTCC2594).